Consider the following 846-residue polypeptide: Interleukin cytokine receptor-related protein 1 (846 aa).

The N-terminal stretch at 1–25 (MFLHSPALLIWLFLFCLAGPQAVRT) is a signal peptide. The Extracellular portion of the chain corresponds to 26–418 (EPYNSTSSSS…KEDTTWTWHT (393 aa)). 6 N-linked (GlcNAc...) asparagine glycosylation sites follow: asparagine 29, asparagine 79, asparagine 186, asparagine 214, asparagine 339, and asparagine 395. Residues 388 to 409 (EKPPATSNQTEESDGKAEKDKK) form a disordered region. Basic and acidic residues predominate over residues 400–409 (SDGKAEKDKK). A helical transmembrane segment spans residues 419-439 (YAITGGAIIAILFILSVCAGL). Residues 440–846 (KCYKKFNNKK…AFHDEVIGIH (407 aa)) are Cytoplasmic-facing. Positions 476 to 618 (SISVLIVYSH…IPNSLMTMTT (143 aa)) constitute an SEFIR domain. Residues 737–771 (GPIHVEPTEPEVLEPAEEPMEEAEEDEEDEDDVDS) form a disordered region. The span at 744–771 (TEPEVLEPAEEPMEEAEEDEEDEDDVDS) shows a compositional bias: acidic residues.

As to quaternary structure, component of a heterodimeric receptor complex composed of ilcr-1 and ilcr-2. The receptor complex interacts with actl-1 and ilc-17.1 with the interaction being mediated by ilcr-2. In terms of tissue distribution, expressed in most neurons.

The protein resides in the cell membrane. Functionally, forms a receptor complex together with receptor ilcr-2, which upon activation acts as a modulator of neuronal activity. Binding of the ligand ilc-17.1 to the ilcr-1/2 receptor complex triggers a signaling cascade that activates the downstream signaling components actl-1, pik-1 and nfki-1, and results in increased neuronal activity in RMG interneurons in response to input from oxygen-sensing neurons. This leads to increased animal movement and promotes aggregation behavior. This is Interleukin cytokine receptor-related protein 1 from Caenorhabditis elegans.